A 945-amino-acid polypeptide reads, in one-letter code: Isoleucine--tRNA ligase (945 aa).

A 'HIGH' region motif is present at residues 66–76 (PYANGDIHLGH). E581 serves as a coordination point for L-isoleucyl-5'-AMP. Positions 622–626 (KMSKS) match the 'KMSKS' region motif. Residue K625 participates in ATP binding. Zn(2+) contacts are provided by C908, C911, C928, and C931.

Belongs to the class-I aminoacyl-tRNA synthetase family. IleS type 1 subfamily. Monomer. Zn(2+) is required as a cofactor.

Its subcellular location is the cytoplasm. It catalyses the reaction tRNA(Ile) + L-isoleucine + ATP = L-isoleucyl-tRNA(Ile) + AMP + diphosphate. Its function is as follows. Catalyzes the attachment of isoleucine to tRNA(Ile). As IleRS can inadvertently accommodate and process structurally similar amino acids such as valine, to avoid such errors it has two additional distinct tRNA(Ile)-dependent editing activities. One activity is designated as 'pretransfer' editing and involves the hydrolysis of activated Val-AMP. The other activity is designated 'posttransfer' editing and involves deacylation of mischarged Val-tRNA(Ile). The protein is Isoleucine--tRNA ligase of Burkholderia vietnamiensis (strain G4 / LMG 22486) (Burkholderia cepacia (strain R1808)).